We begin with the raw amino-acid sequence, 264 residues long: Glutamate racemase (264 aa).

Substrate is bound by residues 10–11 (DS) and 42–43 (YG). Cys-73 serves as the catalytic Proton donor/acceptor. 74-75 (NT) contacts substrate. Residue Cys-183 is the Proton donor/acceptor of the active site. 184-185 (TH) serves as a coordination point for substrate.

It belongs to the aspartate/glutamate racemases family.

The catalysed reaction is L-glutamate = D-glutamate. The protein operates within cell wall biogenesis; peptidoglycan biosynthesis. Functionally, provides the (R)-glutamate required for cell wall biosynthesis. This Streptococcus sanguinis (strain SK36) protein is Glutamate racemase.